Consider the following 440-residue polypeptide: 23S rRNA (uracil(1939)-C(5))-methyltransferase RlmD (440 aa).

Positions 10–68 (KSTQPQRIEFTVDSLDHHCVGIGRHQGKAIFIEGALPGELVKARILEDKKQYAHAALQQ) constitute a TRAM domain. Residues C81, C87, C90, and C169 each contribute to the [4Fe-4S] cluster site. Positions 273, 302, 307, 323, 350, and 371 each coordinate S-adenosyl-L-methionine. C397 serves as the catalytic Nucleophile.

Belongs to the class I-like SAM-binding methyltransferase superfamily. RNA M5U methyltransferase family. RlmD subfamily.

It carries out the reaction uridine(1939) in 23S rRNA + S-adenosyl-L-methionine = 5-methyluridine(1939) in 23S rRNA + S-adenosyl-L-homocysteine + H(+). Catalyzes the formation of 5-methyl-uridine at position 1939 (m5U1939) in 23S rRNA. This chain is 23S rRNA (uracil(1939)-C(5))-methyltransferase RlmD, found in Aeromonas hydrophila subsp. hydrophila (strain ATCC 7966 / DSM 30187 / BCRC 13018 / CCUG 14551 / JCM 1027 / KCTC 2358 / NCIMB 9240 / NCTC 8049).